Here is a 477-residue protein sequence, read N- to C-terminus: Interferon gamma receptor 1 (477 aa).

The N-terminal stretch at 1 to 25 is a signal peptide; it reads MGPQAAAGRMILLVVLMLSAKVGSG. The Extracellular segment spans residues 26-254; sequence ALTSTEDPEP…PPFHDDRKDS (229 aa). 2 N-linked (GlcNAc...) asparagine glycosylation sites follow: Asn61 and Asn85. Intrachain disulfides connect Cys83–Cys91, Cys128–Cys174, Cys203–Cys208, and Cys222–Cys243. Residues 255–275 traverse the membrane as a helical segment; the sequence is IWILVVAPLTVFTVVILVFAY. Residues 276–477 are Cytoplasmic-facing; it reads WYTKKNSFKR…RLTGEAQELS (202 aa). Disordered regions lie at residues 335 to 386 and 402 to 446; these read TVTA…LSSN and SDSG…SGYD. The residue at position 362 (Ser362) is a Phosphoserine. Phosphothreonine is present on Thr367. At Ser370 the chain carries Phosphoserine. A phosphothreonine mark is found at Thr373 and Thr375. Residues 375-386 are compositionally biased toward polar residues; the sequence is TQRRSFSLLSSN. 2 positions are modified to phosphoserine: Ser379 and Ser402. The span at 402-416 shows a compositional bias: low complexity; it reads SDSGLVGSGSSISDL. Tyr445 is subject to Phosphotyrosine.

It belongs to the type II cytokine receptor family. In terms of assembly, monomer. Heterodimer with IFNGR2, to form the IFNG receptor complex. Interacts with JAK1. Interacts (when phosphorylated) with STAT1. Interacts with SOCS1. Post-translationally, phosphorylated at Ser/Thr residues. Phosphorylation of Tyr-445 is required for IFNG receptor signal transduction. Influenza virus infection leads to phosphorylation in a CSNK1A1-dependent manner. In terms of processing, ubiquitinated after phosphorylation in a CSNK1A1-dependent manner, leading to the lysosome-dependent degradation. Proteasomally degraded through 'Lys-48'-mediated ubiquitination. Ubiquitination is necessary for efficient IFNGR1 signaling.

Its subcellular location is the cell membrane. Functionally, receptor subunit for interferon gamma/INFG that plays crucial roles in antimicrobial, antiviral, and antitumor responses by activating effector immune cells and enhancing antigen presentation (, PubMed:20926559, PubMed:27286456). Associates with transmembrane accessory factor IFNGR2 to form a functional receptor. Upon ligand binding, the intracellular domain of IFNGR1 opens out to allow association of downstream signaling components JAK1 and JAK2. In turn, activated JAK1 phosphorylates IFNGR1 to form a docking site for STAT1. Subsequent phosphorylation of STAT1 leads to its dimerization, translocation to the nucleus, and stimulation of target gene transcription. STAT3 can also be activated in a similar manner although activation seems weaker. IFNGR1 intracellular domain phosphorylation also provides a docking site for SOCS1 that regulates the JAK-STAT pathway by competing with STAT1 binding to IFNGR1. This Mus musculus (Mouse) protein is Interferon gamma receptor 1.